The following is a 1108-amino-acid chain: Unconventional myosin-Ie (1108 aa).

Positions 19 to 692 (SGVDDMVLLS…SLFLLEEMRE (674 aa)) constitute a Myosin motor domain. 112-119 (GESGAGKT) contributes to the ATP binding site. The actin-binding stretch occupies residues 581–591 (PHYIRCIKPNE). Residues 695 to 724 (YDGYARVIQKSWRKFVARKKYVQMREEASD) form the IQ domain. Residues 730-922 (KERRRNSINR…NKVLQVSIGP (193 aa)) form the TH1 domain. Residues 919 to 966 (SIGPGLPKNSRPTRRNTTQNTGYSSGTQNANYPVRAAPPPPGYHQNGV) form a disordered region. Over residues 933-949 (RNTTQNTGYSSGTQNAN) the composition is skewed to polar residues. Residues S980 and S1002 each carry the phosphoserine modification. The disordered stretch occupies residues 993-1053 (ARPPLPRQQS…KPQPKPKPQV (61 aa)). Residues 999 to 1013 (RQQSTSSDRVSQTPE) show a composition bias toward polar residues. Residues 1035-1052 (RPPPAGGRPKPQPKPKPQ) show a composition bias toward pro residues. An SH3 domain is found at 1051 to 1108 (PQVPQCKALYAYDAQDTDELSFNANDIIDIIKEDPSGWWTGRLRGKQGLFPNNYVTKI).

The protein belongs to the TRAFAC class myosin-kinesin ATPase superfamily. Myosin family. In terms of assembly, interacts with CALM and F-actin. Interacts (via SH3 domain) with SYNJ1, DNM1 and DNM2. Interacts with ARL14EP. Interacts with CARMIL1. Expressed in the immune system. In the kidney, predominantly expressed in the glomerulus, including podocytes.

It localises to the cytoplasm. Its subcellular location is the cytoskeleton. It is found in the cytoplasmic vesicle. The protein localises to the clathrin-coated vesicle. The protein resides in the cell junction. Functionally, actin-based motor molecule with ATPase activity. Unconventional myosins serve in intracellular movements. Their highly divergent tails bind to membranous compartments, which are then moved relative to actin filaments. Binds to membranes containing anionic phospholipids via its tail domain. Involved in clathrin-mediated endocytosis and intracellular movement of clathrin-coated vesicles. Required for normal morphology of the glomerular basement membrane, normal development of foot processes by kidney podocytes and normal kidney function. In dendritic cells, may control the movement of class II-containing cytoplasmic vesicles along the actin cytoskeleton by connecting them with the actin network via ARL14EP and ARL14. This chain is Unconventional myosin-Ie (MYO1E), found in Homo sapiens (Human).